Here is a 235-residue protein sequence, read N- to C-terminus: Uridylate kinase (235 aa).

ATP is bound at residue 10 to 11; the sequence is GS. A UMP-binding site is contributed by G45. The ATP site is built by G46 and R50. Residues D67 and 115–121 contribute to the UMP site; that span reads VTPGQTT. ATP contacts are provided by T141, Y147, and D150.

It belongs to the UMP kinase family. As to quaternary structure, homohexamer.

It localises to the cytoplasm. It carries out the reaction UMP + ATP = UDP + ADP. It participates in pyrimidine metabolism; CTP biosynthesis via de novo pathway; UDP from UMP (UMPK route): step 1/1. Its activity is regulated as follows. Inhibited by UTP. Functionally, catalyzes the reversible phosphorylation of UMP to UDP. The protein is Uridylate kinase of Methanocorpusculum labreanum (strain ATCC 43576 / DSM 4855 / Z).